Here is a 120-residue protein sequence, read N- to C-terminus: U13-lycotoxin-Ls1c (120 aa).

Residues 1 to 16 (MKILFVLISILYAVYC) form the signal peptide. Residues 17-54 (FSSEEDVDSAYLANELEPVEDINSEQYAALEPKEEQER) constitute a propeptide that is removed on maturation. 3 disulfide bridges follow: C56–C70, C69–C87, and C78–C85. In terms of domain architecture, Agouti spans 56-95 (CADMGQDRKDDCDCCLNIATCNCWFGRYFCSCTFGDYQTC).

This sequence belongs to the neurotoxin 05 (agouti) family. Post-translationally, contains 5 disulfide bonds. As to expression, expressed by the venom gland.

It localises to the secreted. The chain is U13-lycotoxin-Ls1c from Lycosa singoriensis (Wolf spider).